An 81-amino-acid polypeptide reads, in one-letter code: Sulfur carrier protein TusA (81 aa).

Residue cysteine 19 is the Cysteine persulfide intermediate of the active site.

It belongs to the sulfur carrier protein TusA family.

The protein resides in the cytoplasm. Its function is as follows. Sulfur carrier protein which probably makes part of a sulfur-relay system. This chain is Sulfur carrier protein TusA, found in Shewanella sp. (strain ANA-3).